The primary structure comprises 128 residues: Small ribosomal subunit protein bS6 (128 aa).

This sequence belongs to the bacterial ribosomal protein bS6 family.

Binds together with bS18 to 16S ribosomal RNA. This is Small ribosomal subunit protein bS6 from Geotalea uraniireducens (strain Rf4) (Geobacter uraniireducens).